The sequence spans 96 residues: UPF0235 protein PC1_3453 (96 aa).

The protein belongs to the UPF0235 family.

The sequence is that of UPF0235 protein PC1_3453 from Pectobacterium carotovorum subsp. carotovorum (strain PC1).